The sequence spans 137 residues: Small heat shock protein IbpA (137 aa).

The sHSP domain maps to 28–137 (SQGNGGYPPY…TLKPRRIEIK (110 aa)).

Belongs to the small heat shock protein (HSP20) family. Monomer. Forms homomultimers of about 100-150 subunits at optimal growth temperatures. Conformation changes to monomers at high temperatures or high ionic concentrations.

The protein resides in the cytoplasm. In terms of biological role, associates with aggregated proteins, together with IbpB, to stabilize and protect them from irreversible denaturation and extensive proteolysis during heat shock and oxidative stress. Aggregated proteins bound to the IbpAB complex are more efficiently refolded and reactivated by the ATP-dependent chaperone systems ClpB and DnaK/DnaJ/GrpE. Its activity is ATP-independent. This chain is Small heat shock protein IbpA, found in Serratia proteamaculans (strain 568).